A 182-amino-acid chain; its full sequence is MGVEKMVCLASRTGRQFQRYNKGRRQVVGCVPYRFKLSNDGKISDEVEVLVISSQKGHALMFPKGGWELDESVEEAASRECLEEAGVLGNVEHQLGKWDFLSKSRGTYYEGLMFPMLVTEQLELWPEQHVRQRIWMNVTEAREACRDWWMKEALDVLVERLSSPMNQPKEEKTMSISIETMC.

The N-terminal 26 residues, 1–26, are a transit peptide targeting the mitochondrion; that stretch reads MGVEKMVCLASRTGRQFQRYNKGRRQ. The region spanning 27–158 is the Nudix hydrolase domain; sequence VVGCVPYRFK…WMKEALDVLV (132 aa). The Nudix box motif lies at 65–86; it reads GGWELDESVEEAASRECLEEAG. Mg(2+)-binding residues include Glu-80 and Glu-84.

This sequence belongs to the Nudix hydrolase family. It depends on Mg(2+) as a cofactor. Requires Mn(2+) as cofactor. In terms of tissue distribution, expressed in roots, leaves, stems and inflorescences.

The protein resides in the mitochondrion. Functionally, probably mediates the hydrolysis of some nucleoside diphosphate derivatives. This chain is Nudix hydrolase 17, mitochondrial (NUDT17), found in Arabidopsis thaliana (Mouse-ear cress).